Consider the following 71-residue polypeptide: Translation initiation factor IF-1 (71 aa).

The S1-like domain maps to Met-1 to Tyr-71.

The protein belongs to the IF-1 family. As to quaternary structure, component of the 30S ribosomal translation pre-initiation complex which assembles on the 30S ribosome in the order IF-2 and IF-3, IF-1 and N-formylmethionyl-tRNA(fMet); mRNA recruitment can occur at any time during PIC assembly.

The protein localises to the cytoplasm. One of the essential components for the initiation of protein synthesis. Stabilizes the binding of IF-2 and IF-3 on the 30S subunit to which N-formylmethionyl-tRNA(fMet) subsequently binds. Helps modulate mRNA selection, yielding the 30S pre-initiation complex (PIC). Upon addition of the 50S ribosomal subunit IF-1, IF-2 and IF-3 are released leaving the mature 70S translation initiation complex. This chain is Translation initiation factor IF-1, found in Flavobacterium johnsoniae (strain ATCC 17061 / DSM 2064 / JCM 8514 / BCRC 14874 / CCUG 350202 / NBRC 14942 / NCIMB 11054 / UW101) (Cytophaga johnsonae).